A 144-amino-acid chain; its full sequence is Apidaecins type 22 (144 aa).

The signal sequence occupies residues 1–19 (MKNFALAILVVTFVVAVFG). 4 consecutive propeptides follow at residues 20–42 (NTNLDPPTRPTRLRREAEPEAEP), 63–70 (EAEPEAEP), 91–98 (EAEPEAEP), and 119–126 (EAEPEAEP). The interval 20–144 (NTNLDPPTRP…PQPRPPHPRI (125 aa)) is disordered. Over residues 134–144 (IPQPRPPHPRI) the composition is skewed to pro residues.

This sequence belongs to the apidaecin family.

It is found in the secreted. Its function is as follows. Apidaecins have bactericidal activity; predominantly against Gram-negative bacteria. They seem to interfere with cell propagation. This Apis mellifera (Honeybee) protein is Apidaecins type 22.